The chain runs to 342 residues: MLVLGIESSCDETGLALYDTQRGLLAHALYSQVKMHEEYGGVVPELASRDHIRRAIPLLEQVFSESGVAHGAIDAIAYTQGPGLAGALLVGASVACGLGLALDKPVLGIHHLEGHLLSPLLASEPPEFPFIALLVSGGHTQLMRVDGIGQYTMLGETLDDAAGEAFDKSAKLLGLGYPGGPAISRMAEFGDPTAYKLPRPMLHSKNLDFSFSGLKTAVLTVVKNQTTNICEQDKANIARAFVDAIVEVLTAKCVTALKHTGLKRLVIAGGVGANQQLRESLNAAAAKKHFKVFYPELEFCTDNGAMIAFAGAMRLQINPDAAKKDYAFNVKPRWPLDSIREI.

Positions 111 and 115 each coordinate Fe cation. Substrate is bound by residues 134-138 (LVSGG), aspartate 167, glycine 180, and asparagine 274. Aspartate 302 is a Fe cation binding site.

This sequence belongs to the KAE1 / TsaD family. Fe(2+) is required as a cofactor.

The protein localises to the cytoplasm. The catalysed reaction is L-threonylcarbamoyladenylate + adenosine(37) in tRNA = N(6)-L-threonylcarbamoyladenosine(37) in tRNA + AMP + H(+). Required for the formation of a threonylcarbamoyl group on adenosine at position 37 (t(6)A37) in tRNAs that read codons beginning with adenine. Is involved in the transfer of the threonylcarbamoyl moiety of threonylcarbamoyl-AMP (TC-AMP) to the N6 group of A37, together with TsaE and TsaB. TsaD likely plays a direct catalytic role in this reaction. The polypeptide is tRNA N6-adenosine threonylcarbamoyltransferase (Herminiimonas arsenicoxydans).